A 353-amino-acid chain; its full sequence is MMSTLSYTLGQLAAHVGAELRGDADLPIQGLATLQEAGPAQLSFLANPQYRKYLPESRAGAVLLTAADADGFSGTALVVANPYLAYASLSHLFDRKPKAAAGIHPTAIVAADAEVDPSASVGAYAVIESGARIGAGVSIGAHCVIGARSVIGEGGWLAPRVTLYHDVTIGARVSIQSGAVIGGEGFGFANEKGVWQKIAQIGGVTIGDDVEIGANTTIDRGALSDTLIGNGVKLDNQIMIAHNVQIGDHTAMAACVGISGSAKIGRHCMLAGGVGLVGHIEICDNVFVTGMTMVTRSITEPGSYSSGTAMQPAAEWKKSAARIRQLDDMARRLQQLEKRLAAVTSSGDASSDA.

The active-site Proton acceptor is the H242.

The protein belongs to the transferase hexapeptide repeat family. LpxD subfamily. Homotrimer.

It catalyses the reaction a UDP-3-O-[(3R)-3-hydroxyacyl]-alpha-D-glucosamine + a (3R)-hydroxyacyl-[ACP] = a UDP-2-N,3-O-bis[(3R)-3-hydroxyacyl]-alpha-D-glucosamine + holo-[ACP] + H(+). The protein operates within bacterial outer membrane biogenesis; LPS lipid A biosynthesis. Functionally, catalyzes the N-acylation of UDP-3-O-acylglucosamine using 3-hydroxyacyl-ACP as the acyl donor. Is involved in the biosynthesis of lipid A, a phosphorylated glycolipid that anchors the lipopolysaccharide to the outer membrane of the cell. In Pseudomonas aeruginosa (strain UCBPP-PA14), this protein is UDP-3-O-acylglucosamine N-acyltransferase.